We begin with the raw amino-acid sequence, 344 residues long: Dihydroorotase (344 aa).

Residues His14 and His16 each coordinate Zn(2+). Substrate contacts are provided by residues His16 to Arg18 and Asn42. Lys100, His137, and His175 together coordinate Zn(2+). Lys100 is subject to N6-carboxylysine. Residue His137 coordinates substrate. Residue Leu220 coordinates substrate. Residue Asp248 participates in Zn(2+) binding. Asp248 is an active-site residue. Substrate contacts are provided by His252 and Ala264.

The protein belongs to the metallo-dependent hydrolases superfamily. DHOase family. Class II DHOase subfamily. As to quaternary structure, homodimer. The cofactor is Zn(2+).

The enzyme catalyses (S)-dihydroorotate + H2O = N-carbamoyl-L-aspartate + H(+). It functions in the pathway pyrimidine metabolism; UMP biosynthesis via de novo pathway; (S)-dihydroorotate from bicarbonate: step 3/3. Catalyzes the reversible cyclization of carbamoyl aspartate to dihydroorotate. This chain is Dihydroorotase, found in Ralstonia pickettii (strain 12J).